We begin with the raw amino-acid sequence, 1936 residues long: Trinucleotide repeat-containing gene 6C protein (1936 aa).

Basic and acidic residues predominate over residues 1–31 (MEEKKKKKQEEKKKKEGAQKKAADQKTKVPE). 6 disordered regions span residues 1-160 (MEEK…PTYR), 181-256 (PSIT…NSNG), 366-412 (PQES…AMQT), 439-931 (NGSS…IRRK), 961-1063 (VIQS…VAFG), and 1115-1139 (ESTSSCSSWGNAPKKGLQKGMKTSG). Over residues 34-44 (KTCSSQPQPAG) the composition is skewed to polar residues. The segment covering 45–57 (TSTSTSTSTISSS) has biased composition (low complexity). Over residues 58 to 71 (NNGKRASASGQQPA) the composition is skewed to polar residues. Over residues 76-88 (LPREVPPRFRQQE) the composition is skewed to basic and acidic residues. Composition is skewed to polar residues over residues 100-111 (PTGTLTSVSPTQ) and 183-217 (ITGTETESASECTTDTDSASNCGSENSSMATGSAQ). A sufficient for interaction with argonaute family proteins region spans residues 211–1133 (MATGSAQGNF…GNAPKKGLQK (923 aa)). The segment covering 218–235 (GNFTGHTKKTNGNNGTNG) has biased composition (low complexity). Residues 366–393 (PQESTEPQTSTSQNVSFSAQPQNLNTDG) show a composition bias toward polar residues. Composition is skewed to low complexity over residues 394-408 (PNNTNPMNSSPNPIN), 439-453 (NGSSVSQVSGGSAEG), and 469-480 (GNSNSGFSQGNG). Residues 481–498 (DTVNSALSAKQNGSSSAV) are compositionally biased toward polar residues. Omega-N-methylarginine is present on arginine 523. The segment covering 572–585 (GWESPSVTSQNPTV) has biased composition (polar residues). The segment covering 594–614 (SWAKAASSGTTASEGSSDGSG) has biased composition (low complexity). The segment covering 625–636 (GTGEGRRRDKGI) has biased composition (basic and acidic residues). Polar residues predominate over residues 654–669 (LSNTGWGQTPVKQNTA). The segment covering 674–684 (ESPRSERKNDN) has biased composition (basic and acidic residues). The residue at position 675 (serine 675) is a Phosphoserine. The segment covering 694–718 (TQASNSGGKNDGSIMNSTNTSSVSG) has biased composition (polar residues). Low complexity-rich tracts occupy residues 720–730 (VNAPPAAVPAN) and 750–772 (SISSTAVSTAAAAKSGHAWSGAA). Composition is skewed to polar residues over residues 834–866 (NRSGSGWNDTTRSGNSGWGNSTNTKANPGTNWG) and 873–888 (PQQNWASKPQDNNVSN). The residue at position 924 (serine 924) is a Phosphoserine. Low complexity predominate over residues 964 to 982 (SSTTTNTTTTTTTTTSNTT). A Phosphothreonine modification is found at threonine 987. Polar residues predominate over residues 1021–1035 (ENSWGEPSSPSTLVD). The region spanning 1140-1185 (KQDEAWIMSRLIKQLTDMGFPREPAEEALKSNNMNLDQAMSALLEK) is the UBA domain. Serine 1218 bears the Phosphoserine mark. Disordered stretches follow at residues 1291–1312 (AAQARTMQQPPQPPVQPLNSSQ), 1419–1658 (VKQP…PSSS), 1689–1732 (STWS…PSST), and 1848–1869 (TSSWQSSSASSQPRLSAAGSSH). Residues 1388–1419 (MRQQEQQVARTITNLQQQIQQHQRQLAQALLV) adopt a coiled-coil conformation. A compositionally biased stretch (pro residues) spans 1421–1430 (QPPPPPPPPH). Residues 1467–1936 (NTFAPYPLAG…PGDLLSGESL (470 aa)) are silencing domain; interaction with CNOT1 and PAN3. The segment covering 1496 to 1515 (DPSQSQSRLPQWTHPNSMDN) has biased composition (polar residues). The segment at 1578-1624 (KSDSDKISNGSSINWPPEFHPGVPWKGLQNIDPENDPDVTPGSVPTG) is required for interaction with PABPC1. The interval 1578–1936 (KSDSDKISNG…PGDLLSGESL (359 aa)) is sufficient for translational repression when tethered to a target mRNA. A PABPC1-interacting motif-2 (PAM2) region spans residues 1588 to 1606 (SSINWPPEFHPGVPWKGLQ). Residues 1623–1633 (TGPTINTTIQD) are compositionally biased toward polar residues. Low complexity predominate over residues 1641–1658 (SGGSSPPSSQNATLPSSS). Residues 1689–1703 (STWSSGPTSHTQASL) are compositionally biased toward polar residues. One can recognise an RRM domain in the interval 1811–1878 (AQKSLHMCVL…HGLVRSDAGH (68 aa)). The segment at 1842-1936 (GQALPPTSSW…PGDLLSGESL (95 aa)) is interaction with the CCR4-NOT complex. A compositionally biased stretch (low complexity) spans 1848–1865 (TSSWQSSSASSQPRLSAA).

This sequence belongs to the GW182 family. Interacts with one or more of the argonaute family proteins AGO1, AGO2, AGO3 and AGO4. Interacts with PABPC1 and EIF4G1. Interacts with CNOT1; the interaction is direct and mediates the association with the CCR4-NOT complex. Interacts with PAN3; the interaction mediates the association with the PAN complex.

Its function is as follows. Plays a role in RNA-mediated gene silencing by micro-RNAs (miRNAs). Required for miRNA-dependent translational repression of complementary mRNAs by argonaute family proteins. As scaffoldng protein associates with argonaute proteins bound to partially complementary mRNAs and simultaneously can recruit CCR4-NOT and PAN deadenylase complexes. In Homo sapiens (Human), this protein is Trinucleotide repeat-containing gene 6C protein (TNRC6C).